The following is a 474-amino-acid chain: Ribulose bisphosphate carboxylase large chain (474 aa).

Lys-13 carries the N6,N6,N6-trimethyllysine modification. Residues Asn-122 and Thr-172 each coordinate substrate. The Proton acceptor role is filled by Lys-174. Residue Lys-176 participates in substrate binding. Residues Lys-200, Asp-202, and Glu-203 each coordinate Mg(2+). Lys-200 carries the post-translational modification N6-carboxylysine. His-293 functions as the Proton acceptor in the catalytic mechanism. Substrate-binding residues include Arg-294, His-326, and Ser-378.

It belongs to the RuBisCO large chain family. Type I subfamily. In terms of assembly, heterohexadecamer of 8 large chains and 8 small chains; disulfide-linked. The disulfide link is formed within the large subunit homodimers. The cofactor is Mg(2+). The disulfide bond which can form in the large chain dimeric partners within the hexadecamer appears to be associated with oxidative stress and protein turnover.

It is found in the plastid. The protein resides in the chloroplast. The enzyme catalyses 2 (2R)-3-phosphoglycerate + 2 H(+) = D-ribulose 1,5-bisphosphate + CO2 + H2O. It catalyses the reaction D-ribulose 1,5-bisphosphate + O2 = 2-phosphoglycolate + (2R)-3-phosphoglycerate + 2 H(+). Functionally, ruBisCO catalyzes two reactions: the carboxylation of D-ribulose 1,5-bisphosphate, the primary event in carbon dioxide fixation, as well as the oxidative fragmentation of the pentose substrate in the photorespiration process. Both reactions occur simultaneously and in competition at the same active site. This is Ribulose bisphosphate carboxylase large chain from Dendrophthora clavata (Columbian mistletoe).